Reading from the N-terminus, the 328-residue chain is Ornithine carbamoyltransferase, catabolic (328 aa).

Carbamoyl phosphate-binding positions include serine 56–threonine 59, glutamine 83, arginine 107, and histidine 134–glutamine 137. L-ornithine-binding positions include asparagine 166, aspartate 230, and serine 234 to methionine 235. Residues cysteine 270–leucine 271 and arginine 315 contribute to the carbamoyl phosphate site.

The protein belongs to the aspartate/ornithine carbamoyltransferase superfamily. OTCase family.

It localises to the cytoplasm. The enzyme catalyses carbamoyl phosphate + L-ornithine = L-citrulline + phosphate + H(+). Its pathway is amino-acid degradation; L-arginine degradation via ADI pathway; carbamoyl phosphate from L-arginine: step 2/2. Reversibly catalyzes the transfer of the carbamoyl group from carbamoyl phosphate (CP) to the N(epsilon) atom of ornithine (ORN) to produce L-citrulline. This is Ornithine carbamoyltransferase, catabolic (arcB) from Borreliella afzelii (Borrelia afzelii).